We begin with the raw amino-acid sequence, 4010 residues long: Extracellular matrix organizing protein FRAS1 (4010 aa).

Residues 1-25 (MGVLKAWLGVALALAEFAVLPNCEG) form the signal peptide. VWFC domains lie at 26–87 (ACLY…PQCA), 92–152 (GSCH…PICV), 156–216 (KPCS…SQCS), 218–278 (RSCS…EECA), and 282–342 (RSCS…PECI). The Extracellular segment spans residues 26-3903 (ACLYQGSFLA…AASLSQTGAS (3878 aa)). Ser-343 carries the post-translational modification Phosphoserine. In terms of domain architecture, VWFC 6 spans 358 to 416 (SSSAREIKHVPDGEKWEEGPCKLCECREAQVTCYEPSCPPCPVATLALVVKGQCCPDCT). 14 FU repeats span residues 408-459 (KGQC…GFYQ), 461-504 (GSLC…GFYQ), 506-552 (HHSC…GFYN), 554-598 (QGTC…GYYA), 601-646 (TGSC…GFYP), 648-704 (HGIC…HFYL), 707-752 (TGLC…THFN), 754-799 (EGTC…EQFL), 802-851 (VGYC…GHYK), 853-899 (RGTC…GHYL), 902-947 (NQVC…QYYL), 951-996 (TKTC…QHYR), 998-1041 (SGSC…GYFA), and 1045-1088 (KHRC…GFSG). The N-linked (GlcNAc...) asparagine glycan is linked to Asn-727. Asn-1094 and Asn-1107 each carry an N-linked (GlcNAc...) asparagine glycan. CSPG repeat units lie at residues 1101-1196 (TPSL…LKIS), 1216-1307 (APYV…FQAN), 1328-1440 (ALRL…FQVS), 1465-1561 (APKL…FSFA), 1597-1691 (PAFQ…ISVT), 1712-1812 (GPRL…FSVS), and 1834-1938 (PPHI…FYVS). N-linked (GlcNAc...) asparagine glycosylation occurs at Asn-1506. N-linked (GlcNAc...) asparagine glycosylation occurs at Asn-1779. Asn-1950 and Asn-1980 each carry an N-linked (GlcNAc...) asparagine glycan. CSPG repeat units follow at residues 1959 to 2059 (EPPR…FSLT), 2080 to 2179 (IPHL…FDVV), 2201 to 2293 (PPVV…FVLS), 2313 to 2406 (ARPL…FTVS), and 2441 to 2538 (TPRI…FLVK). Calx-beta domains lie at 2545–2648 (VSDN…VGLS), 2661–2772 (AKVV…IALA), 2786–2892 (AKVL…VFLS), 2907–3009 (IAIN…VYLG), and 3027–3131 (ATVT…LVLG). N-linked (GlcNAc...) asparagine glycans are attached at residues Asn-2565, Asn-2666, and Asn-2684. N-linked (GlcNAc...) asparagine glycans are attached at residues Asn-2910, Asn-2987, Asn-3072, Asn-3220, Asn-3678, and Asn-3877. The helical transmembrane segment at 3904–3924 (IGSALAAIMLLLLLFLVACFV) threads the bilayer. At 3925 to 4010 (TRKCQKQKKK…HNNLQDGTEV (86 aa)) the chain is on the cytoplasmic side.

Belongs to the FRAS1 family.

It is found in the cell membrane. Its function is as follows. Involved in extracellular matrix organization. Required for the regulation of epidermal-basement membrane adhesion responsible for proper organogenesis during embryonic development. Involved in brain organization and function. The polypeptide is Extracellular matrix organizing protein FRAS1 (Mus musculus (Mouse)).